The sequence spans 728 residues: Catalase B (728 aa).

Catalysis depends on residues His107 and Asn180. Tyr394 serves as a coordination point for heme.

It belongs to the catalase family. The cofactor is heme.

Its subcellular location is the secreted. It catalyses the reaction 2 H2O2 = O2 + 2 H2O. In terms of biological role, occurs in almost all aerobically respiring organisms and serves to protect cells from the toxic effects of hydrogen peroxide. The polypeptide is Catalase B (CATB) (Ajellomyces capsulatus (Darling's disease fungus)).